The primary structure comprises 195 residues: ATP-dependent Clp protease proteolytic subunit (195 aa).

The Nucleophile role is filled by S97. H122 is an active-site residue.

It belongs to the peptidase S14 family. As to quaternary structure, fourteen ClpP subunits assemble into 2 heptameric rings which stack back to back to give a disk-like structure with a central cavity, resembling the structure of eukaryotic proteasomes.

The protein resides in the cytoplasm. The enzyme catalyses Hydrolysis of proteins to small peptides in the presence of ATP and magnesium. alpha-casein is the usual test substrate. In the absence of ATP, only oligopeptides shorter than five residues are hydrolyzed (such as succinyl-Leu-Tyr-|-NHMec, and Leu-Tyr-Leu-|-Tyr-Trp, in which cleavage of the -Tyr-|-Leu- and -Tyr-|-Trp bonds also occurs).. Cleaves peptides in various proteins in a process that requires ATP hydrolysis. Has a chymotrypsin-like activity. Plays a major role in the degradation of misfolded proteins. The sequence is that of ATP-dependent Clp protease proteolytic subunit from Lactobacillus acidophilus (strain ATCC 700396 / NCK56 / N2 / NCFM).